The primary structure comprises 53 residues: Insulin (53 aa).

The propeptide at 1-30 is c peptide; sequence DVEPLLGFLSPKSGQENEVDDFPYKGQGEL. A disulfide bridge links Cys38 with Cys43.

It belongs to the insulin family. As to quaternary structure, heterodimer of a B chain and an A chain linked by two disulfide bonds.

The protein resides in the secreted. Its function is as follows. Insulin decreases blood glucose concentration. It increases cell permeability to monosaccharides, amino acids and fatty acids. It accelerates glycolysis, the pentose phosphate cycle, and glycogen synthesis in liver. The protein is Insulin (ins) of Anguilla anguilla (European freshwater eel).